A 447-amino-acid polypeptide reads, in one-letter code: MATHAALAVSRIPVTQRLQSKSAIHSFPAQCSSKRLEVAEFSGLRMSSIGGEASFFDAVAAQIIPKAVTTSTPVRGETVAKLKVAINGFGRIGRNFLRCWHGRKDSPLEVVVLNDSGGVKNASHLLKYDSMLGTFKAEVKIVDNETISVDGKLIKVVSNRDPLKLPWAELGIDIVIEGTGVFVDGPGAGKHIQAGASKVIITAPAKGADIPTYVMGVNEQDYGHDVANIISNASCTTNCLAPFAKVLDEEFGIVKGTMTTTHSYTGDQRLLDASHRDLRRARAAALNIVPTSTGAAKAVSLVLPQLKGKLNGIALRVPTPNVSVVDLVINVEKKGLTAEDVNEAFRKAANGPMKGILDVCDAPLVSVDFRCSDVSTTIDSSLTMVMGDDMVKVVAWYDNEWGYSQRVVDLAHLVASKWPGAEAVGSGDPLEDFCKTNPADEECKVYD.

Residues 1 to 80 constitute a chloroplast transit peptide; the sequence is MATHAALAVS…STPVRGETVA (80 aa). NADP(+) contacts are provided by residues 91-92, aspartate 115, and arginine 160; that span reads RI. Residues 234–236, threonine 265, arginine 280, 293–294, and arginine 316 each bind D-glyceraldehyde 3-phosphate; these read SCT and TG. Cysteine 235 serves as the catalytic Nucleophile. Asparagine 399 lines the NADP(+) pocket.

Belongs to the glyceraldehyde-3-phosphate dehydrogenase family. As to quaternary structure, tetramer of either four A chains (GAPDH 2) or two A and two B chains (GAPDH 1). In terms of tissue distribution, expressed in leaves and stems.

It localises to the plastid. The protein resides in the chloroplast membrane. Its subcellular location is the chloroplast stroma. It carries out the reaction D-glyceraldehyde 3-phosphate + phosphate + NADP(+) = (2R)-3-phospho-glyceroyl phosphate + NADPH + H(+). It participates in carbohydrate biosynthesis; Calvin cycle. Functionally, involved in the photosynthetic reductive pentose phosphate pathway (Calvin-Benson cycle). Catalyzes the reduction of 1,3-diphosphoglycerate by NADPH. This is Glyceraldehyde-3-phosphate dehydrogenase GAPB, chloroplastic (GAPB) from Arabidopsis thaliana (Mouse-ear cress).